Reading from the N-terminus, the 476-residue chain is Angiotensinogen (476 aa).

The N-terminal stretch at 1-24 (MAPAGLSLGATILCLLAWAGLAAG) is a signal peptide. The cysteines at positions 42 and 161 are disulfide-linked. Positions 45 to 64 (LEKPSVETPADPTLTPVPIQ) are disordered. Residue Asn295 is glycosylated (N-linked (GlcNAc...) asparagine).

The protein belongs to the serpin family. In response to low blood pressure, the enzyme renin/REN cleaves angiotensinogen to produce angiotensin-1. Angiotensin-1 is a substrate of ACE (angiotensin converting enzyme) that removes a dipeptide to yield the physiologically active peptide angiotensin-2. Angiotensin-1 and angiotensin-2 can be further processed to generate angiotensin-3, angiotensin-4. Angiotensin 1-9 is cleaved from angiotensin-1 by ACE2 and can be further processed by ACE to produce angiotensin 1-7, angiotensin 1-5 and angiotensin 1-4. Angiotensin 1-7 has also been proposed to be cleaved from angiotensin-2 by ACE2 or from angiotensin-1 by MME (neprilysin). Post-translationally, the disulfide bond is labile. Angiotensinogen is present in the circulation in a near 40:60 ratio with the oxidized disulfide-bonded form, which preferentially interacts with receptor-bound renin.

The protein localises to the secreted. In terms of biological role, essential component of the renin-angiotensin system (RAS), a potent regulator of blood pressure, body fluid and electrolyte homeostasis. Acts directly on vascular smooth muscle as a potent vasoconstrictor, affects cardiac contractility and heart rate through its action on the sympathetic nervous system, and alters renal sodium and water absorption through its ability to stimulate the zona glomerulosa cells of the adrenal cortex to synthesize and secrete aldosterone. Acts by binding to angiotensin receptors AGTR1 and AGTR2. Also binds the DEAR/FBXW7-AS1 receptor. Functionally, stimulates aldosterone release. Its function is as follows. Is a ligand for the G-protein coupled receptor MAS1. Has vasodilator and antidiuretic effects. Has an antithrombotic effect that involves MAS1-mediated release of nitric oxide from platelets. The protein is Angiotensinogen (AGT) of Ovis aries (Sheep).